Consider the following 238-residue polypeptide: Putative ABC transporter ATP-binding protein AF_1841 (238 aa).

Positions 8-238 (IEADSVSYDY…EELLEKAGVI (231 aa)) constitute an ABC transporter domain. 41–48 (GANGSGKS) serves as a coordination point for ATP.

The protein belongs to the ABC transporter superfamily.

The protein resides in the cell membrane. Probably part of an ABC transporter complex. Responsible for energy coupling to the transport system. In Archaeoglobus fulgidus (strain ATCC 49558 / DSM 4304 / JCM 9628 / NBRC 100126 / VC-16), this protein is Putative ABC transporter ATP-binding protein AF_1841.